Here is a 495-residue protein sequence, read N- to C-terminus: Syntaphilin (495 aa).

A disordered region spans residues 1 to 74; it reads MAMSLQGSRR…HGIKPPTPEQ (74 aa). Positions 7-49 are enriched in low complexity; it reads GSRRASAGSRRRTSPPVSVRDAYGTSSLSSSSNSGSCKGSDSS. Residues 79–161 adopt a coiled-coil conformation; it reads LQQKEVCIRH…VKNNLIDKDK (83 aa). Positions 191 to 244 are disordered; it reads VAKEEGTGESAGGSPARSLTRSSTYTKLSDPAVCGDRQPGDPSNTSAEDGADSG. 2 positions are modified to phosphoserine: S200 and S204. The segment covering 207 to 217 has biased composition (polar residues); it reads RSLTRSSTYTK. T214 bears the Phosphothreonine mark. S219 is modified (phosphoserine). T235 carries the phosphothreonine modification. The chain crosses the membrane as a helical span at residues 427-446; sequence YIVDLLAVVVPAVPTVAWLC.

Binds to STX1A. Interacts with DNM1; this interaction inhibits the binding of DNM1 to AMPH and DNM1-receptor-mediated endocytosis.

The protein localises to the membrane. The protein resides in the synapse. It is found in the synaptosome. Inhibits SNARE complex formation by absorbing free STX1A. This Mus musculus (Mouse) protein is Syntaphilin.